We begin with the raw amino-acid sequence, 200 residues long: MVNYPHKLKAKSSINRPVPGIVNFANRGMSFEKMINESNSYYLSRGLAVIHKKPTPIQIVKVDYPHRSRAKIVEAYFRQASTTDYSGVYKGHYIDFEAKETRQKKSMPMKNFHSHQIEHMEAVLEQKGICFVLLHFSSLRETYLLPASYLIEFYKIDKGGKSMPLTYIQEHGYPIEMQQLPSIPYLEIIEQKLLGGIINE.

Mg(2+) contacts are provided by Thr82, Asp84, Glu97, and Gln116.

The protein belongs to the RecU family. Mg(2+) is required as a cofactor.

It is found in the cytoplasm. The enzyme catalyses Endonucleolytic cleavage at a junction such as a reciprocal single-stranded crossover between two homologous DNA duplexes (Holliday junction).. Functionally, endonuclease that resolves Holliday junction intermediates in genetic recombination. Cleaves mobile four-strand junctions by introducing symmetrical nicks in paired strands. Promotes annealing of linear ssDNA with homologous dsDNA. Required for DNA repair, homologous recombination and chromosome segregation. The sequence is that of Holliday junction resolvase RecU from Streptococcus sanguinis (strain SK36).